The chain runs to 381 residues: RING-H2 finger protein ATL1 (381 aa).

The disordered stretch occupies residues 1–31; that stretch reads MDLTDRRNPFNNLVFPPPPPPPSTTFTSPIF. The chain crosses the membrane as a helical span at residues 46 to 66; the sequence is IAVIGILATAFLLVSYYIFVI. The RING-type; atypical zinc-finger motif lies at 134-176; that stretch reads CSVCLNEFQEDEKLRIIPNCCHVFHIDCIDIWLQGNANCPLCR. 2 disordered regions span residues 249-269 and 334-354; these read TSNE…PIKF and RQIP…GNSR. Residues 250-261 are compositionally biased toward polar residues; the sequence is SNEVSTGNSPKS.

This sequence belongs to the RING-type zinc finger family. ATL subfamily.

Its subcellular location is the membrane. The enzyme catalyses S-ubiquitinyl-[E2 ubiquitin-conjugating enzyme]-L-cysteine + [acceptor protein]-L-lysine = [E2 ubiquitin-conjugating enzyme]-L-cysteine + N(6)-ubiquitinyl-[acceptor protein]-L-lysine.. Its pathway is protein modification; protein ubiquitination. This Arabidopsis thaliana (Mouse-ear cress) protein is RING-H2 finger protein ATL1 (ATL1).